Reading from the N-terminus, the 450-residue chain is UPF0236 protein in vanSb 3'region (450 aa).

It belongs to the UPF0236 family.

This is UPF0236 protein in vanSb 3'region from Streptococcus gallolyticus (Streptococcus bovis biotype I).